The primary structure comprises 605 residues: Ankyrin repeat domain-containing protein 13D (605 aa).

UIM domains are found at residues 482–501 (EDDD…AGTE) and 528–547 (EEQL…STES). The span at 538 to 554 (QESLQLSTESRGPESPQ) shows a compositional bias: low complexity. A disordered region spans residues 538 to 605 (QESLQLSTES…RILQLSLTEH (68 aa)). The residue at position 552 (serine 552) is a Phosphoserine. Threonine 556 is subject to Phosphothreonine. The segment covering 564-575 (SFEEQLRLALEL) has biased composition (low complexity). UIM domains follow at residues 564-583 (SFEE…QEEL) and 589-605 (QEED…LTEH). Basic and acidic residues predominate over residues 576–589 (SSREQEELERRGQQ).

As to quaternary structure, interacts with EGFR (ubiquitinated); the interaction is direct and may regulate EGFR internalization.

Its subcellular location is the cell membrane. The protein localises to the late endosome. Its function is as follows. Ubiquitin-binding protein that specifically recognizes and binds 'Lys-63'-linked ubiquitin. Does not bind 'Lys-48'-linked ubiquitin. Positively regulates the internalization of ligand-activated EGFR by binding to the Ub moiety of ubiquitinated EGFR at the cell membrane. The protein is Ankyrin repeat domain-containing protein 13D (Ankrd13d) of Mus musculus (Mouse).